Consider the following 383-residue polypeptide: Putative glutamate--cysteine ligase 2 (383 aa).

The protein belongs to the glutamate--cysteine ligase type 2 family. YbdK subfamily.

The enzyme catalyses L-cysteine + L-glutamate + ATP = gamma-L-glutamyl-L-cysteine + ADP + phosphate + H(+). Functionally, ATP-dependent carboxylate-amine ligase which exhibits weak glutamate--cysteine ligase activity. This Clavibacter sepedonicus (Clavibacter michiganensis subsp. sepedonicus) protein is Putative glutamate--cysteine ligase 2.